A 232-amino-acid chain; its full sequence is 2,3,4,5-tetrahydropyridine-2,6-dicarboxylate N-acetyltransferase (232 aa).

Belongs to the transferase hexapeptide repeat family. DapH subfamily.

It carries out the reaction (S)-2,3,4,5-tetrahydrodipicolinate + acetyl-CoA + H2O = L-2-acetamido-6-oxoheptanedioate + CoA. It participates in amino-acid biosynthesis; L-lysine biosynthesis via DAP pathway; LL-2,6-diaminopimelate from (S)-tetrahydrodipicolinate (acetylase route): step 1/3. Its function is as follows. Catalyzes the transfer of an acetyl group from acetyl-CoA to tetrahydrodipicolinate. In Streptococcus gordonii (strain Challis / ATCC 35105 / BCRC 15272 / CH1 / DL1 / V288), this protein is 2,3,4,5-tetrahydropyridine-2,6-dicarboxylate N-acetyltransferase.